Reading from the N-terminus, the 677-residue chain is Elongation factor G 2 (677 aa).

The tr-type G domain occupies 8-283 (SRIRNIGIIA…AVVNFLPSPE (276 aa)). Residues 17–24 (AHIDAGKT), 81–85 (DTPGH), and 135–138 (NKMD) contribute to the GTP site.

The protein belongs to the TRAFAC class translation factor GTPase superfamily. Classic translation factor GTPase family. EF-G/EF-2 subfamily.

The protein localises to the cytoplasm. Functionally, catalyzes the GTP-dependent ribosomal translocation step during translation elongation. During this step, the ribosome changes from the pre-translocational (PRE) to the post-translocational (POST) state as the newly formed A-site-bound peptidyl-tRNA and P-site-bound deacylated tRNA move to the P and E sites, respectively. Catalyzes the coordinated movement of the two tRNA molecules, the mRNA and conformational changes in the ribosome. The sequence is that of Elongation factor G 2 from Syntrophus aciditrophicus (strain SB).